The following is a 455-amino-acid chain: Xylan O-acetyltransferase 3 (455 aa).

The span at methionine 1 to threonine 15 shows a compositional bias: low complexity. The tract at residues methionine 1–arginine 32 is disordered. The Cytoplasmic segment spans residues methionine 1–proline 42. Pro residues predominate over residues serine 16–alanine 28. A helical; Signal-anchor for type II membrane protein transmembrane segment spans residues valine 43–glycine 59. At glutamate 60 to glutamine 455 the chain is on the lumenal side. Asparagine 82, asparagine 107, and asparagine 146 each carry an N-linked (GlcNAc...) asparagine glycan. Disulfide bonds link cysteine 96-cysteine 147, cysteine 118-cysteine 183, cysteine 127-cysteine 423, and cysteine 339-cysteine 419. Positions glycine 170–serine 172 match the GDS motif motif. Catalysis depends on serine 172, which acts as the Nucleophile. Asparagine 278 and asparagine 348 each carry an N-linked (GlcNAc...) asparagine glycan. The active-site Proton donor is aspartate 418. Residues aspartate 418 to histidine 421 carry the DXXH motif motif. Histidine 421 acts as the Proton acceptor in catalysis.

This sequence belongs to the PC-esterase family. TBL subfamily. Highly expressed in leaves. Expressed in roots, stems and inflorescences.

Its subcellular location is the golgi apparatus membrane. Functionally, xylan acetyltransferase required for 2-O- and 3-O-monoacetylation of xylosyl residues in xylan. Catalyzes the 2-O-acetylation of xylan, followed by nonenzymatic acetyl migration to the O-3 position, resulting in products that are monoacetylated at both O-2 and O-3 positions. In Oryza sativa subsp. japonica (Rice), this protein is Xylan O-acetyltransferase 3.